The primary structure comprises 245 residues: MLKTRQCLLGVRTFHGVTSRIWSFFLYILRKHIRTIIQYQTVRYDILSLSPISRNRLNNVKRKILVLDLDETLIHSHHDGVLRPTVRPGTPPDFILKVVIDKHPVRFFVHKRPHVDFFLEVVSQWYELVVFTASMEIYGSAVADKLDNNKAILKRRYYRQHCTLDSGSYIKDLSVVHDDLSSVVILDNSPGAYRSHPDNAIPIKSWFSDPSDTALLNLLPMLDALRFPADVRSVLSRNLHQHRLW.

A helical transmembrane segment spans residues C7–L29. Residues N58 to L225 form the FCP1 homology domain.

It belongs to the dullard family.

The protein localises to the endoplasmic reticulum membrane. The protein resides in the nucleus membrane. The enzyme catalyses O-phospho-L-seryl-[protein] + H2O = L-seryl-[protein] + phosphate. It catalyses the reaction O-phospho-L-threonyl-[protein] + H2O = L-threonyl-[protein] + phosphate. Functionally, serine/threonine protein phosphatase that may dephosphorylate and activate lipins. Lipins are phosphatidate phosphatases that catalyze the conversion of phosphatidic acid to diacylglycerol and control the metabolism of fatty acids at different levels. May indirectly modulate the lipid composition of nuclear and/or endoplasmic reticulum membranes and be required for proper nuclear membrane morphology and/or dynamics. May also indirectly regulate the production of lipid droplets and triacylglycerol. May antagonize BMP signaling. In Danio rerio (Zebrafish), this protein is CTD nuclear envelope phosphatase 1B (ctdnep1b).